We begin with the raw amino-acid sequence, 97 residues long: Meromycolate extension acyl carrier protein (97 aa).

A Carrier domain is found at 3 to 81; the sequence is ASQQEIIAGL…DVVAYIQKLE (79 aa). S41 carries the post-translational modification O-(pantetheine 4'-phosphoryl)serine.

This sequence belongs to the acyl carrier protein (ACP) family. 4'-phosphopantetheine is transferred from CoA to a specific serine of apo-AcpM.

Its subcellular location is the cytoplasm. Functionally, acyl carrier protein involved in meromycolate extension. The protein is Meromycolate extension acyl carrier protein (acpM) of Mycolicibacterium aurum (Mycobacterium aurum).